The following is a 155-amino-acid chain: HTH-type transcriptional regulator IscR (155 aa).

Positions lysine 2–lysine 136 constitute an HTH rrf2-type domain. The segment at residues leucine 30–arginine 53 is a DNA-binding region (H-T-H motif). Residues proline 141–valine 145 form a heme regulatory motif (HRM) region. Cysteine 142 contributes to the [2Fe-2S] cluster binding site.

Requires [2Fe-2S] cluster as cofactor.

Functionally, regulates the transcription of several operons and genes involved in the biogenesis of Fe-S clusters and Fe-S-containing proteins. Functions as a transcriptional repressor of genes involved in iron metabolism by directly binding to the promoter region of genes preceded by the Iron-Rhodo-box motif. Binds to iscR and hemP promoter regions independently of an Fe-S cluster, but their transcriptional repression is Fe-S cluster-dependent. Seems to activate some target genes in a Fe-S cluster-independent manner. Negatively regulates its own transcription in the presence of iron only. This chain is HTH-type transcriptional regulator IscR, found in Cereibacter sphaeroides (strain ATCC 17023 / DSM 158 / JCM 6121 / CCUG 31486 / LMG 2827 / NBRC 12203 / NCIMB 8253 / ATH 2.4.1.) (Rhodobacter sphaeroides).